A 494-amino-acid polypeptide reads, in one-letter code: Probable cobyric acid synthase (494 aa).

Residues 249 to 447 (SVRIAVIRLP…LHGIFFNRRF (199 aa)) enclose the GATase cobBQ-type domain. The Nucleophile role is filled by C331. H439 is an active-site residue.

Belongs to the CobB/CobQ family. CobQ subfamily.

Its pathway is cofactor biosynthesis; adenosylcobalamin biosynthesis. In terms of biological role, catalyzes amidations at positions B, D, E, and G on adenosylcobyrinic A,C-diamide. NH(2) groups are provided by glutamine, and one molecule of ATP is hydrogenolyzed for each amidation. This Methanopyrus kandleri (strain AV19 / DSM 6324 / JCM 9639 / NBRC 100938) protein is Probable cobyric acid synthase.